Consider the following 465-residue polypeptide: Monogalactosyldiacylglycerol synthase 3, chloroplastic (465 aa).

UDP-binding positions include histidine 86, arginine 255, 365–369, and glutamate 387; that span reads GTIAE.

It belongs to the glycosyltransferase 28 family. As to expression, expressed mainly in roots. Detected in flowers, leaves, stems, siliques and pollen tubes.

It is found in the plastid. Its subcellular location is the chloroplast outer membrane. It carries out the reaction a 1,2-diacyl-sn-glycerol + UDP-alpha-D-galactose = a 1,2-diacyl-3-O-(beta-D-galactosyl)-sn-glycerol + UDP + H(+). The catalysed reaction is 1,2-di-(9Z,12Z-octadecadienoyl)-sn-glycerol + UDP-alpha-D-galactose = 1,2-di-(9Z,12Z-octadecadienoyl)-3-beta-D-galactosyl-sn-glycerol + UDP + H(+). The enzyme catalyses 1-(9Z-octadecenoyl)-2-hexadecanoyl-sn-glycerol + UDP-alpha-D-galactose = 1-(9Z-octadecenoyl)-2-hexadecanoyl-3-beta-D-galactosyl-sn-glycerol + UDP + H(+). It catalyses the reaction 1,2-di-(9Z-octadecenoyl)-sn-glycerol + UDP-alpha-D-galactose = 1,2-di-(9Z-octadecenoyl)-3-beta-D-galactosyl-sn-glycerol + UDP + H(+). Its activity is regulated as follows. Inhibited by galvestine-1. Involved in the synthesis of monogalactosyldiacylglycerol, the major structural component of photosynthetic membranes and in the chloroplast envelope biogenesis. Can use both prokaryotic (18:1/16:0) or eukaryotic (18:2/18:2) 1,2-diacylglycerol species, but operates with some preference for the eukaryotic one. Plays a minor role in galactolipid synthesis in chloroplasts. Is essential for membrane lipid remodeling in phosphate-starved roots. Acts as the major factor involved in digalactosyldiacylglycerol (DGDG) biosynthesis in phosphate-starved roots. Does not seem to be required for plant growth under nutrient-sufficient conditions. Required for membrane lipid remodeling in plants grown in acidic conditions. The sequence is that of Monogalactosyldiacylglycerol synthase 3, chloroplastic from Arabidopsis thaliana (Mouse-ear cress).